The chain runs to 100 residues: Urease subunit gamma (100 aa).

Belongs to the urease gamma subunit family. In terms of assembly, heterotrimer of UreA (gamma), UreB (beta) and UreC (alpha) subunits. Three heterotrimers associate to form the active enzyme.

The protein localises to the cytoplasm. It catalyses the reaction urea + 2 H2O + H(+) = hydrogencarbonate + 2 NH4(+). It participates in nitrogen metabolism; urea degradation; CO(2) and NH(3) from urea (urease route): step 1/1. This chain is Urease subunit gamma, found in Rhizobium etli (strain CIAT 652).